The primary structure comprises 142 residues: Glia maturation factor beta (142 aa).

An N-acetylserine modification is found at S2. One can recognise an ADF-H domain in the interval 4–139 (SLVVCDVAED…TEEWLREKLG (136 aa)).

The protein belongs to the actin-binding proteins ADF family. GMF subfamily. Post-translationally, phosphorylated; stimulated by phorbol ester.

In terms of biological role, this protein causes differentiation of brain cells, stimulation of neural regeneration, and inhibition of proliferation of tumor cells. The polypeptide is Glia maturation factor beta (GMFB) (Homo sapiens (Human)).